The following is a 308-amino-acid chain: Uridylate cyclase (308 aa).

Mn(2+) is bound by residues D62 and D106.

This sequence belongs to the adenylyl cyclase class-4/guanylyl cyclase family. Pyrimidine cyclase subfamily. Homodimer. It depends on Mn(2+) as a cofactor.

The protein localises to the cytoplasm. The catalysed reaction is GTP = 3',5'-cyclic GMP + diphosphate. The enzyme catalyses UTP = 3',5'-cyclic UMP + diphosphate. In terms of biological role, pycsar (pyrimidine cyclase system for antiphage resistance) provides immunity against bacteriophage. The pyrimidine cyclase (PycC) synthesizes cyclic nucleotides in response to infection; these serve as specific second messenger signals. The signals activate the adjacent effector, leading to bacterial cell death and abortive phage infection. A clade D Pycsar system. Functionally, the pyrimidine cyclase gene of a two-gene Pycsar system, generates cyclic UMP (cUMP) from UTP as well as cGMP from GTP to a lesser extent, has little to no activity on ATP or CTP. Expression of this and adjacent effector PtPycTM (AC A0A4Q9KQH5) probably confers resistance to bacteriophage. The genes are probably only expressed in response to bacteriophage infection. In Propioniciclava tarda, this protein is Uridylate cyclase.